We begin with the raw amino-acid sequence, 624 residues long: tRNA uridine 5-carboxymethylaminomethyl modification enzyme MnmG (624 aa).

Residues 13–18, valine 125, and serine 180 contribute to the FAD site; that span reads GGGHAG. 273–287 is an NAD(+) binding site; sequence GPRYCPSIEDKIVRF. Glutamine 370 provides a ligand contact to FAD.

It belongs to the MnmG family. In terms of assembly, homodimer. Heterotetramer of two MnmE and two MnmG subunits. The cofactor is FAD.

Its subcellular location is the cytoplasm. In terms of biological role, NAD-binding protein involved in the addition of a carboxymethylaminomethyl (cmnm) group at the wobble position (U34) of certain tRNAs, forming tRNA-cmnm(5)s(2)U34. This is tRNA uridine 5-carboxymethylaminomethyl modification enzyme MnmG from Legionella pneumophila (strain Corby).